Here is a 299-residue protein sequence, read N- to C-terminus: Taste receptor type 2 member 4 (299 aa).

At 1 to 9 (MLRLFYFSA) the chain is on the extracellular side. The chain crosses the membrane as a helical span at residues 10–30 (VIASVILNFVGIIMNLFITVV). The Cytoplasmic segment spans residues 31-46 (NCKTWVKSHRISSSDR). Residues 47–67 (ILFSLGITRFLMLGLFLVNTI) form a helical membrane-spanning segment. At 68–81 (YFVSSNMERSVYLS) the chain is on the extracellular side. Residues 82–102 (AFFVLCFMFLDSSSLWFVTLL) traverse the membrane as a helical segment. The Cytoplasmic portion of the chain corresponds to 103-131 (NILYCVKITNFQHSVFLLLKRSISPKIPR). Residues 132-152 (LLLAFVLISAFTTCLYITLSQ) traverse the membrane as a helical segment. Topologically, residues 153-172 (ASPFPELVTTRNNTSFNISE) are extracellular. Residues N164, N165, and N169 are each glycosylated (N-linked (GlcNAc...) asparagine). A helical transmembrane segment spans residues 173–193 (GILSLVVSLVLSSSLQFIINV). Over 194–230 (TSASLLIHSLRRHIQKMQKNATGFWNPQMEAHVGAMK) the chain is Cytoplasmic. The chain crosses the membrane as a helical span at residues 231 to 251 (LMVYFLILYIPYSVATLVQYL). Residues 252 to 262 (PFYAGMDMGTK) are Extracellular-facing. Residues 263–283 (SICLIFATLYSPGHSVLIIIT) traverse the membrane as a helical segment. Residues 284–299 (HPKLKTTAKKILCFKK) are Cytoplasmic-facing.

It belongs to the G-protein coupled receptor T2R family.

The protein localises to the membrane. It is found in the cell projection. Its subcellular location is the cilium membrane. In terms of biological role, gustducin-coupled receptor implicated in the perception of bitter compounds in the oral cavity and the gastrointestinal tract. Signals through PLCB2 and the calcium-regulated cation channel TRPM5. In airway epithelial cells, binding of denatonium increases the intracellular calcium ion concentration and stimulates ciliary beat frequency. This chain is Taste receptor type 2 member 4 (TAS2R4), found in Gorilla gorilla gorilla (Western lowland gorilla).